A 407-amino-acid polypeptide reads, in one-letter code: MTTAIPNSYRSGPDERGHFGIFGGRFVAETLMPLILDLEKAYADAKADPAFQGEMNSYRTHYVGRPSPLYYAERLTEHLGGAKIYFKRDELNHTGSHKVNNVLGQIMLARRMGKKRIIAETGAGQHGVATATLCARFGLDCVVYMGAVDVERQQPNVLRMEMLGAKVIPVQSGARTLKDAMNEALRDWVTNVHNTFYCIGTVAGPHPYPMMVRDFQSVIGQETRTQMQEAEGRLPDSLVACIGGGSNAMGLFHPFLDDPSVEIFGVEAAGHGLTQLHAASIAGGRPGVLHGNRTYLLMDDDGQIAEAHSISAGLDYPGIGPEHSWLHEAKRVTYLSATDDEALDAFLLLSRLEGIIPALEPAHAVAKVMQLAPNKPKDHLMVVNLCGRGDKDVPQVGEILRKRAKQS.

N6-(pyridoxal phosphate)lysine is present on lysine 98.

The protein belongs to the TrpB family. Tetramer of two alpha and two beta chains. Pyridoxal 5'-phosphate is required as a cofactor.

It catalyses the reaction (1S,2R)-1-C-(indol-3-yl)glycerol 3-phosphate + L-serine = D-glyceraldehyde 3-phosphate + L-tryptophan + H2O. It participates in amino-acid biosynthesis; L-tryptophan biosynthesis; L-tryptophan from chorismate: step 5/5. Its function is as follows. The beta subunit is responsible for the synthesis of L-tryptophan from indole and L-serine. The sequence is that of Tryptophan synthase beta chain from Bradyrhizobium sp. (strain ORS 278).